Consider the following 565-residue polypeptide: Formate--tetrahydrofolate ligase (565 aa).

ATP is bound at residue 67-74 (TPLGEGKT).

The protein belongs to the formate--tetrahydrofolate ligase family.

The catalysed reaction is (6S)-5,6,7,8-tetrahydrofolate + formate + ATP = (6R)-10-formyltetrahydrofolate + ADP + phosphate. The protein operates within one-carbon metabolism; tetrahydrofolate interconversion. The protein is Formate--tetrahydrofolate ligase of Saccharopolyspora erythraea (strain ATCC 11635 / DSM 40517 / JCM 4748 / NBRC 13426 / NCIMB 8594 / NRRL 2338).